We begin with the raw amino-acid sequence, 217 residues long: MEVENEAHCCPGSSSGGSREYKVVMLGAGGVGKSAVTMQFISHQFPDYHDPTIEDAYKTQVRIDNEPAYLDILDTAGQAEFTAMREQYMRGGEGFIICYSVTDRQSFQEAAKFKELIFQVRHTYEIPLVLVGNKIDLEQFRQVSTEEGMNLARDYNCAFFETSAALRFGIDDAFQGLVREIRRKESMLSLVERKLKRKDSLWKKIKASLKKKRENML.

Residues 27-34 (GAGGVGKS), 74-78 (DTAGQ), and 133-136 (NKID) each bind GTP.

Belongs to the small GTPase superfamily. Ras family. In terms of assembly, interacts with PLXNB3. Interacts with AFDN, the C-terminal domain of RALGDS and RLF, but not with RIN1 and PIK3CA. RLF binds exclusively to the active GTP-bound form. Binds calmodulin. Interacts with POU4F1 (via N-terminus); the interaction controls POU4F1 transactivation activity on some neuronal target genes. As to expression, expressed in ganglion cell layer (GCL), inner plexiform layer (IPL) and inner nuclear layer (INL) of the retina. Expressed in retinal ganglion cells (RGCs). Expressed in horizontal, bipolar and amacrine cells, but not Mueller glia, of the INL (at protein level). Neuron-specific. Expressed in ganglion cell layer (GCL) and inner plexiform layer (IPL).

It localises to the nucleus. Its subcellular location is the cell membrane. The enzyme catalyses GTP + H2O = GDP + phosphate + H(+). Its activity is regulated as follows. Alternates between an inactive form bound to GDP and an active form bound to GTP. Binds and exchanges GTP and GDP. Binds and modulates the activation of POU4F1 as gene expression regulator. The chain is GTP-binding protein Rit2 (Rit2) from Mus musculus (Mouse).